We begin with the raw amino-acid sequence, 903 residues long: Protein translocase subunit SecA (903 aa).

ATP is bound by residues Q85, G103–T107, and D492. The tract at residues G863–Y890 is disordered. 4 residues coordinate Zn(2+): C882, C884, C893, and C894.

It belongs to the SecA family. As to quaternary structure, monomer and homodimer. Part of the essential Sec protein translocation apparatus which comprises SecA, SecYEG and auxiliary proteins SecDF. Other proteins may also be involved. The cofactor is Zn(2+).

It localises to the cell membrane. The protein localises to the cytoplasm. It catalyses the reaction ATP + H2O + cellular proteinSide 1 = ADP + phosphate + cellular proteinSide 2.. Part of the Sec protein translocase complex. Interacts with the SecYEG preprotein conducting channel. Has a central role in coupling the hydrolysis of ATP to the transfer of proteins into and across the cell membrane, serving as an ATP-driven molecular motor driving the stepwise translocation of polypeptide chains across the membrane. This chain is Protein translocase subunit SecA, found in Desulforudis audaxviator (strain MP104C).